Here is a 1533-residue protein sequence, read N- to C-terminus: MGHSKQIRILLLNEMEKLEKTLFRLEQGFELQFRLGPTLQGKAVTVYTNYPFPGETFNREKFRSLEWENPTEREDDSDKYCKLNLQQAGSFQYYFLQGNEKSGGGYIVVDPILYVGADNHVLPLDCVTLQTFLAKCLGPFDEWESRLRVAKESGYNMIHFTPLQTLGLSRSCYSLANQLELNPDFSRPNKKYTWSDVGQLVEKMKKEWNVLCITDVVYNHTAANSKWIQEHPESAYNLVNSPHLKPAWVLDRALWHLSCDVAEGKYKEKGVPALIENDHQMNCIRKIIWEDIFPKIQLWEFFQVDVYKAVEQFRRLLTQENRKITTKPDPKEHLKIIQDPEYRRLGCTVDMNIALATFIPHDKGPAAIDECCNWFRKRIEELNSEKHQLVNYHQEQAVNCLLGNVFYERMAGHGPKLGPVTRKHPLVTRYFTFPFEEMTVSTEESMIHNPNKACFLMAHNGWVMGDDPLRNFAEPGSEVYLRRELICWGDSVKLRYGNKPEDCPYLWAHMKKYTEITATYFQGVRLDNCHSTPLHVAEYMLDAARKLQPNLYVVAELFTGSEDLDNIFVTRLGISSLIREAMSAYNSHEEGRLVYRYGGEPVGSFVQPCLRPLMPAIAHALFMDITHDNECPIVHRSEYDALPSTTIVSMACCASGSTKGYDELVPHQISVVSEERFYTKWNPGASPSNTGEVNFQSGIIAARCAINKLHQELGAQGFIQVYVDQVDEDIVAVTRHSPSIHQSVVSVSRTAFRNPKTSFYSKEVPQMCIPGKIEEVVLEARTIERNTKPYQKDKNSINGMPNITVEIREHIQLSESKIVKQAGVATKGPNEYIQEIEFENLSPGSVIIFRVSLDPHAQVAVGILRNHLTQFSPHFKSGSLAVENSDPILKIPFAFIASKLTLAELNQVLYRCEAEEQEDGGGCYDIPNWSSLKYAGLQGLMSVLAEIRPKNDLGHPFCDNLRSGDWMIDYVSNRLISRSGTIAEVGKWFQAMFFYLKQIPRYLIPCYFDAILIGAYTTLLDIAWKQMSSFVQNGSTFVKHLSLGSVQMCGVGKCPSLPLLSPSLMDVPYRLNEITKEKEQCCVSLAAGLPHFSSGIFRCWGRDTFIALRGLLLITGRYLEARNIILAFAGTLRHGLIPNLLGEGTYARYNCRDAVWWWLQCIQDYCKMVPNGLDILKCPVSRMYPTDDSVPLSAGTLDQPLFEVIQEVMQRHIQGIQFRERNAGPQIDRNMKDEGFNITAGVDEETGFVYGGNRLNCGTWMDKMGESDRARNRGIPATPRDGSAVEIVGLSKSTVRWLLELSKKRIFPYHEVRVKRHGKVVTISYDEWNKKIQDNFEKLFHVSEDPXDFNEKHPNLVHKRGIYKDSYGASSPWCDYQLRPNFTIAMVVAPELFTAEKAWKALEIAEKKLLGPLGMKTLDPDDMVYCGIYDNALDNDNYNLAKGFNYHQGPEWLWPVGYFLRAKLYFSKLMGPEANAKTVFLVKNILSRHYVHLERSPWKGLPELTNENGQYCPFSCETQAWSIATVLETLYDL.

The residue at position 64 (Ser64) is a Phosphoserine. Residues Asp527, His530, and Asp628 contribute to the active site.

The protein belongs to the glycogen debranching enzyme family. Monomer. Interacts with NHLRC1/malin. In terms of processing, ubiquitinated.

The protein localises to the cytoplasm. The catalysed reaction is Transfers a segment of a (1-&gt;4)-alpha-D-glucan to a new position in an acceptor, which may be glucose or a (1-&gt;4)-alpha-D-glucan.. It carries out the reaction Hydrolysis of (1-&gt;6)-alpha-D-glucosidic branch linkages in glycogen phosphorylase limit dextrin.. Multifunctional enzyme acting as 1,4-alpha-D-glucan:1,4-alpha-D-glucan 4-alpha-D-glycosyltransferase and amylo-1,6-glucosidase in glycogen degradation. This is Glycogen debranching enzyme (AGL) from Canis lupus familiaris (Dog).